Here is a 489-residue protein sequence, read N- to C-terminus: Cytochrome P450 monooxygenase bfoB (489 aa).

The first 18 residues, 1–18 (MLALYLIAGLLVGLLVYR), serve as a signal peptide directing secretion. Residues Asn113, Asn348, and Asn386 are each glycosylated (N-linked (GlcNAc...) asparagine). Cys429 contacts heme.

This sequence belongs to the cytochrome P450 family. Heme serves as cofactor.

The enzyme catalyses 2 fonsecin B + NADPH + O2 + H(+) = bifonsecin B + NADP(+) + 2 H2O. It carries out the reaction 2 rubrofusarin B + NADPH + O2 + 3 H(+) = nigerone + NADP(+) + 2 H2O. The protein operates within secondary metabolite biosynthesis. In terms of biological role, cytochrome P450 monooxygenase; part of the gene cluster that mediates the biosynthesis of bifonsecin B, a dimeric gamma-naphthopyrone. The first step in the biosynthesis of bifonsecin B is the production of gamma-naphthopyrone precursor YWA1 by the non-reducing polyketide synthase albA, via condensation of one acetyl-CoA starter unit with 6 malonyl-CoA units. YWA1 is then methylated by bfoE at position C-6 to yield foncesin which is further methylated at position C-8 by bfoD to produce fonsecin B. A key enzyme in the biosynthetic pathway is the cytochrome P450 monooxygenase bfoB which catalyzes the oxidative dimerization of fonsecin B to bifonsecin B. Bfob also catalyzes the oxidative dimerization of rubrofusarin B into nigerone. The stereoselectivity of bfoB is influenced by the two natural monomeric substrates; homodimerization of fonsecin B yields a stereochemically pure biaryl, M-foncerine B, while rubrofusarin B yields a mixture of enantiomers M- and P-nigerone. The protein is Cytochrome P450 monooxygenase bfoB of Aspergillus brasiliensis (strain CBS 101740 / IMI 381727 / IBT 21946).